Consider the following 86-residue polypeptide: SEED MATURATION PROTEIN 1 (86 aa).

A disordered region spans residues 52–86; it reads RIEKGKEQSAASGDQTQIQRDIKDIKGTRTDDSPR. Polar residues predominate over residues 60 to 70; it reads SAASGDQTQIQ. The span at 71–86 shows a compositional bias: basic and acidic residues; it reads RDIKDIKGTRTDDSPR.

Belongs to the LEA type 3 family.

Protein chaperone involved in seed maturation and dormancy maintenance after high temperature fluctuation (e.g. secondary dormancy after 3 days at 40 degrees Celsius), probably by protecting heat labile proteins required for secondary dormancy (e.g. G6PDH, HOP3, SR45, ECP63, SCL33, RPL32B, ChlADR1, MSBP1, MBF1B, At3g01690, At1g15280, At1g15290, At2g31410, At1g11630, At1g65090, EMB2279, EMB1674 and RPL35C). This is SEED MATURATION PROTEIN 1 from Arabidopsis thaliana (Mouse-ear cress).